The sequence spans 390 residues: Chorismate synthase 2 (390 aa).

Arg39 and Arg45 together coordinate NADP(+). FMN-binding positions include 132–134, 253–254, Gly298, 313–317, and Arg339; these read RSS, NA, and KPIPT.

This sequence belongs to the chorismate synthase family. As to quaternary structure, homotetramer. FMNH2 serves as cofactor.

It carries out the reaction 5-O-(1-carboxyvinyl)-3-phosphoshikimate = chorismate + phosphate. Its pathway is metabolic intermediate biosynthesis; chorismate biosynthesis; chorismate from D-erythrose 4-phosphate and phosphoenolpyruvate: step 7/7. Its function is as follows. Catalyzes the anti-1,4-elimination of the C-3 phosphate and the C-6 proR hydrogen from 5-enolpyruvylshikimate-3-phosphate (EPSP) to yield chorismate, which is the branch point compound that serves as the starting substrate for the three terminal pathways of aromatic amino acid biosynthesis. This reaction introduces a second double bond into the aromatic ring system. In Bacillus thuringiensis subsp. konkukian (strain 97-27), this protein is Chorismate synthase 2.